The following is a 248-amino-acid chain: Tetraspanin-16 (248 aa).

Over 1-7 (MSEIRTG) the chain is Cytoplasmic. Residues 8 to 28 (FLTMATIILICIGLTMTGTGL) traverse the membrane as a helical segment. The Extracellular segment spans residues 29–44 (YYRKTVSKCIRETDGS). A helical transmembrane segment spans residues 45–65 (FVVIGLLLLVIPQFALYAICC). The Cytoplasmic segment spans residues 66-69 (HSKR). The helical transmembrane segment at 70–90 (MFTIYIYAMIFVSIVLGGYSL) threads the bilayer. Topologically, residues 91-208 (KCFIYNTTFG…MSILKAIVHQ (118 aa)) are extracellular. Residues Asn96 and Asn141 are each glycosylated (N-linked (GlcNAc...) asparagine). The helical transmembrane segment at 209–229 (WKYLSMFSYPALFLVCLSLAI) threads the bilayer. The Cytoplasmic portion of the chain corresponds to 230-248 (SRSIMDTFDEPDDYRGYYS).

Belongs to the tetraspanin (TM4SF) family.

The protein resides in the membrane. May be involved in the regulation of cell differentiation. This is Tetraspanin-16 (TET16) from Arabidopsis thaliana (Mouse-ear cress).